The primary structure comprises 446 residues: RUN domain-containing protein 3A (446 aa).

The tract at residues 1–298 is interaction with RAP2A; that stretch reads MEASFVQTTM…LQLQLEEAAA (298 aa). Residues 52–189 enclose the RUN domain; the sequence is DDSSEEFVNF…IDFSFCLKGE (138 aa). T215 bears the Phosphothreonine mark. Residues 216 to 239 form a disordered region; sequence DEEERHSAESSTSEDNSPEHPYLP. The residue at position 232 (S232) is a Phosphoserine. The stretch at 267–322 forms a coiled coil; the sequence is YLEELVRLRESQLKDLEAENRRLQLQLEEAAAQNQREKRELEGVILELQEQLTGLI. A compositionally biased stretch (polar residues) spans 372 to 384; sequence PLSAEASLSSDSQ. A disordered region spans residues 372-404; that stretch reads PLSAEASLSSDSQRLGEGTRDEEPWGPIGKDPT. 2 positions are modified to phosphoserine: S416 and S419.

Belongs to the RUNDC3 family. Interacts with the GTP-bound form of RAP2A.

Functionally, may act as an effector of RAP2A in neuronal cells. In Homo sapiens (Human), this protein is RUN domain-containing protein 3A (RUNDC3A).